The sequence spans 116 residues: uncharacterized protein (116 aa).

This is an uncharacterized protein from Homo sapiens (Human).